Here is a 195-residue protein sequence, read N- to C-terminus: Protein GrpE (195 aa).

The protein belongs to the GrpE family. In terms of assembly, homodimer.

The protein localises to the cytoplasm. Functionally, participates actively in the response to hyperosmotic and heat shock by preventing the aggregation of stress-denatured proteins, in association with DnaK and GrpE. It is the nucleotide exchange factor for DnaK and may function as a thermosensor. Unfolded proteins bind initially to DnaJ; upon interaction with the DnaJ-bound protein, DnaK hydrolyzes its bound ATP, resulting in the formation of a stable complex. GrpE releases ADP from DnaK; ATP binding to DnaK triggers the release of the substrate protein, thus completing the reaction cycle. Several rounds of ATP-dependent interactions between DnaJ, DnaK and GrpE are required for fully efficient folding. The sequence is that of Protein GrpE from Francisella tularensis subsp. tularensis (strain FSC 198).